The following is a 251-amino-acid chain: Fibroblast growth factor 23 (251 aa).

Residues 1–24 form the signal peptide; that stretch reads MLGARLRLWVCALCSVCSMSVLRA. The cysteines at positions 95 and 113 are disulfide-linked. O-linked (GalNAc) threonine glycosylation is found at T171 and T178. Positions 172-221 are disordered; the sequence is PIPRRHTRSAEDDSERDPLNVLKPRARMTPAPASCSQELPSAEDNSPMAS. S180 carries the post-translational modification Phosphoserine; by FAM20C. The span at 205–219 shows a compositional bias: polar residues; the sequence is SCSQELPSAEDNSPM.

The protein belongs to the heparin-binding growth factors family. Interacts with FGFR1, FGFR2, FGFR3 and FGFR4. Affinity between fibroblast growth factors (FGFs) and their receptors is increased by KL and heparan sulfate glycosaminoglycans that function as coreceptors. In terms of processing, following secretion this protein is inactivated by cleavage into a N-terminal fragment and a C-terminal fragment. The processing is effected by proprotein convertases. O-glycosylated at Thr-171 and Thr-178 by GALNT3 and glycosylation of Thr-178 requires previous glycosylation at Thr171. Glycosylation is necessary for secretion; it blocks processing by proprotein convertases when the O-glycan is alpha 2,6-sialylated. Competition between proprotein convertase cleavage and block of cleavage by O-glycosylation determines the level of secreted active FGF23. Post-translationally, phosphorylation at Ser-180 mediated by FAM20C slows down glycosylation at Thr-178 notably. Expressed in osteogenic cells particularly during phases of active bone remodeling. In adult trabecular bone, expressed in osteocytes and flattened bone-lining cells (inactive osteoblasts).

Its subcellular location is the secreted. Regulator of phosphate homeostasis. Inhibits renal tubular phosphate transport by reducing SLC34A1 levels. Up-regulates EGR1 expression in the presence of KL. Acts directly on the parathyroid to decrease PTH secretion. Regulator of vitamin-D metabolism. Negatively regulates osteoblast differentiation and matrix mineralization. This chain is Fibroblast growth factor 23 (FGF23), found in Homo sapiens (Human).